Consider the following 229-residue polypeptide: MSNPLDRLERKLGYTFKDQDLMVLALTHRSYAGRNNERLEFLGDAILNFVIGEALFHHFPQAREGQLSRLRARLVKGETLALLARGFEVGDYLRLGSGELKSGGFRRESILADAMEALIGAIYLDTGMDSARERIIAWLGPQLRELTPVDTNKDPKTRLQEFLQSRGCDLPRYEVVDIQGEPHCRTFFVDCEVALLSDKTHGHGGSRRIAEQVAAAAALVALGVENGHD.

Residues 5 to 127 (LDRLERKLGY…LIGAIYLDTG (123 aa)) enclose the RNase III domain. E40 is a binding site for Mg(2+). The active site involves D44. Mg(2+)-binding residues include D113 and E116. E116 is a catalytic residue. The DRBM domain maps to 154 to 224 (DPKTRLQEFL…AAAALVALGV (71 aa)).

Belongs to the ribonuclease III family. In terms of assembly, homodimer. It depends on Mg(2+) as a cofactor.

The protein resides in the cytoplasm. It carries out the reaction Endonucleolytic cleavage to 5'-phosphomonoester.. Its function is as follows. Digests double-stranded RNA. Involved in the processing of primary rRNA transcript to yield the immediate precursors to the large and small rRNAs (23S and 16S). Processes some mRNAs, and tRNAs when they are encoded in the rRNA operon. Processes pre-crRNA and tracrRNA of type II CRISPR loci if present in the organism. This is Ribonuclease 3 from Pseudomonas paraeruginosa (strain DSM 24068 / PA7) (Pseudomonas aeruginosa (strain PA7)).